The sequence spans 156 residues: Small ribosomal subunit protein uS7 (156 aa).

It belongs to the universal ribosomal protein uS7 family. Part of the 30S ribosomal subunit. Contacts proteins S9 and S11.

Its function is as follows. One of the primary rRNA binding proteins, it binds directly to 16S rRNA where it nucleates assembly of the head domain of the 30S subunit. Is located at the subunit interface close to the decoding center, probably blocks exit of the E-site tRNA. The polypeptide is Small ribosomal subunit protein uS7 (Mycolicibacterium smegmatis (strain ATCC 700084 / mc(2)155) (Mycobacterium smegmatis)).